Reading from the N-terminus, the 320-residue chain is MSEEDISLPIIDLSGYLSPKSPDDRQNVIEQIRDACRDFGFFQLKGHGIPISLQKELLKSLGTLFSMPKEEKMKLSYLENPCRRGYEASGMSMREGDAMPDSKEAYYLGREDPVVEFSGFYGPNVWPNLPEEDFRGPVWEYYQKTSQLGKTIWEVLLQGLGYSTDLMEAFAKRPLVQMKLIRYPSPSVTLPGQFGVGAHNDFGGVTVLLQQAGKDGLEVWLEKQQKWLSVPALEDVYVINCGDMIMKWSGGRYKSVRHRVINKTEGERHSCATFWHGDVFATNPLNPEDPNKETVGQLLVKRFRHQMSIHKEGLAQVGEL.

The Fe2OG dioxygenase domain occupies 174–278 (PLVQMKLIRY…HSCATFWHGD (105 aa)). H199, D201, and H258 together coordinate Fe cation. Position 268 (R268) interacts with 2-oxoglutarate.

The protein belongs to the iron/ascorbate-dependent oxidoreductase family. Fe(2+) serves as cofactor.

It carries out the reaction trihazone A + 2-oxoglutarate + O2 + H(+) = trihazone D + succinate + 2 CO2 + H2O. Its pathway is secondary metabolite biosynthesis. Functionally, 2-oxoglutarate-dependent dioxygenase; part of the gene cluster that produces the tetronate natural products trihazones. ThnC catalyzes the oxidative decarboxylation of trihazone A to trihazone D. The C4 hydrogen is first abstracted by the iron-oxo species generated in ThnC to give a tertiary radical at C4. This is followed by decarboxylation and removal of the second electron by the FeIII-OH center to give trihazone D. The pathway begins with the formation of trihazone A by the hybrid PKS-NRPS synthetase thnA and the trans-enoyl reductase thnE. Trihazone A is further decarboxylated by the 2-oxoglutarate-dependent dioxygenase thnC to produce trihazone D. The function of the FAD-dependent monooxygenase thnD has still to be identified. This Trichoderma harzianum (Hypocrea lixii) protein is 2-oxoglutarate-dependent dioxygenase thnC.